The chain runs to 426 residues: Serine protease HTRA2, mitochondrial (426 aa).

Residues 1–30 constitute a mitochondrion transit peptide; the sequence is MALRGSHRLDDFIRRCSALTLFHSQAPSRR. A disordered region spans residues 30 to 59; the sequence is RVSHCGRDRRQQQDPPGQGRQEQQESGGGH. Residues 31-78 constitute a propeptide that is removed on maturation; it reads VSHCGRDRRQQQDPPGQGRQEQQESGGGHWSRFGWRSLIRFFVPFSLG. Over residues 42 to 54 the composition is skewed to low complexity; sequence QDPPGQGRQEQQE. A helical membrane pass occupies residues 68–86; that stretch reads LIRFFVPFSLGAVASSLVI. The IAP-binding signature appears at 79–82; the sequence is AVAS. The segment at 143–306 is serine protease; it reads SNGSGFIIEQ…IPIDYVKVFL (164 aa). Active-site charge relay system residues include His161, Asp193, and Ser270. Positions 329-414 constitute a PDZ domain; it reads MGITMLTLTP…HLDIVILRGV (86 aa).

Belongs to the peptidase S1C family. Interacts with th/DIAP1 (via BIR 2 domain).

The protein localises to the mitochondrion intermembrane space. It is found in the mitochondrion membrane. It carries out the reaction Cleavage of non-polar aliphatic amino-acids at the P1 position, with a preference for Val, Ile and Met. At the P2 and P3 positions, Arg is selected most strongly with a secondary preference for other hydrophilic residues.. Its function is as follows. Serine protease that shows proteolytic activity against a non-specific substrate beta-casein. Promotes or induces cell death either by direct binding to and inhibition of BIRC proteins (also called inhibitor of apoptosis proteins, IAPs), leading to an increase in caspase activity, or by a BIRC inhibition-independent, caspase-independent and serine protease activity-dependent mechanism. Can antagonize antiapoptotic activity of th/Diap1 by directly inducing the degradation of th/Diap1. The polypeptide is Serine protease HTRA2, mitochondrial (Drosophila ananassae (Fruit fly)).